A 93-amino-acid polypeptide reads, in one-letter code: Cell division protein CrgA (93 aa).

2 helical membrane passes run 31–51 and 70–90; these read VWFV…LMVF and LGPW…LLTM.

This sequence belongs to the CrgA family.

The protein resides in the cell membrane. Functionally, involved in cell division. This chain is Cell division protein CrgA, found in Mycobacterium leprae (strain Br4923).